We begin with the raw amino-acid sequence, 105 residues long: ATP-dependent Clp protease adapter protein ClpS (105 aa).

It belongs to the ClpS family. Binds to the N-terminal domain of the chaperone ClpA.

Functionally, involved in the modulation of the specificity of the ClpAP-mediated ATP-dependent protein degradation. This Prochlorococcus marinus (strain MIT 9515) protein is ATP-dependent Clp protease adapter protein ClpS.